We begin with the raw amino-acid sequence, 860 residues long: DNA mismatch repair protein MutS (860 aa).

607–614 provides a ligand contact to ATP; the sequence is GPNMSGKS.

The protein belongs to the DNA mismatch repair MutS family.

Its function is as follows. This protein is involved in the repair of mismatches in DNA. It is possible that it carries out the mismatch recognition step. This protein has a weak ATPase activity. This is DNA mismatch repair protein MutS from Listeria monocytogenes serotype 4b (strain CLIP80459).